Reading from the N-terminus, the 347-residue chain is Ornithine transcarbamylase, mitochondrial (347 aa).

The N-terminal 25 residues, 1–25 (MINSISNTVLLKSVVSKRFFSSSAK), are a transit peptide targeting the mitochondrion. Carbamoyl phosphate-binding positions include 84–87 (STRT), R135, H162, and Q165. N194, D258, S262, and M263 together coordinate L-ornithine. The active-site Proton acceptor is C300. Carbamoyl phosphate is bound by residues 300–301 (CL) and R328.

The protein belongs to the aspartate/ornithine carbamoyltransferase superfamily. OTCase family.

It localises to the mitochondrion matrix. It catalyses the reaction carbamoyl phosphate + L-ornithine = L-citrulline + phosphate + H(+). It functions in the pathway amino-acid biosynthesis; L-arginine biosynthesis; L-arginine from L-ornithine and carbamoyl phosphate: step 1/3. The chain is Ornithine transcarbamylase, mitochondrial (OTC) from Pachysolen tannophilus (Yeast).